The chain runs to 484 residues: MSTQIEDQDWKSKLNIPKKDTRPQTEDVLSTKGNTFEDFYLKRELLMGIFEAGFEKPSPIQEESIPVALAGRDILARAKNGTGKTAAFVIPTLEKVKSKHNKIQALIMVPTRELALQTSQVVRTLGKHCGISCMVTTGGTNLRDDILRLNETVHILVGTPGRVLDLASRKVADLSECNLFIMDEADKMLSRDFKSIIEQILVFLPKNHQSLLFSATFPLSVKEFMVNHLHKPYEINLMDELTLKGITQYYAFVEEKQKLHCLNTLFSKLQINQAIIFCNSTNRVELLAKKITDLGYSCYYSHARMKQQERNRVFHEFRQGKVRTLVCSDLLTRGIDIQAVNVVINFDFPKTAETYLHRIGRSGRFGHLGLAINLINWNDRFNLYKIEQELGTEIQAIPATIDKSLYVANDNSAVPVPFPIEQSHVQPSMQQQHMPLPPQQPIPNQQFGGMPQQYSPQQQQYQQYPPQGMAMPPQGIQMQQQPQF.

A disordered region spans residues M1 to D27. The span at Q8–T25 shows a compositional bias: basic and acidic residues. Residues N34–E62 carry the Q motif motif. A Helicase ATP-binding domain is found at I65 to I235. A78–T85 contributes to the ATP binding site. A DEAD box motif is present at residues D183–D186. The Helicase C-terminal domain occupies G245–L405. Positions Q430–F484 are disordered. Residues I442–F484 are compositionally biased toward low complexity.

It belongs to the DEAD box helicase family. DDX6/DHH1 subfamily.

The protein localises to the cytoplasm. The protein resides in the P-body. The enzyme catalyses ATP + H2O = ADP + phosphate + H(+). ATP-dependent RNA helicase involved in mRNA turnover, and more specifically in mRNA decapping by activating the decapping enzyme DCP1. Is involved in G1/S DNA-damage checkpoint recovery, probably through the regulation of the translational status of a subset of mRNAs. May also have a role in translation and mRNA nuclear export. The protein is ATP-dependent RNA helicase DHH1 (DHH1) of Vanderwaltozyma polyspora (strain ATCC 22028 / DSM 70294 / BCRC 21397 / CBS 2163 / NBRC 10782 / NRRL Y-8283 / UCD 57-17) (Kluyveromyces polysporus).